A 315-amino-acid chain; its full sequence is Type II restriction enzyme AvaI (315 aa).

It catalyses the reaction Endonucleolytic cleavage of DNA to give specific double-stranded fragments with terminal 5'-phosphates.. A P subtype restriction enzyme that recognizes the double-stranded sequence 5'-CYCGRG-3' and cleaves after C-1. In Anabaena variabilis, this protein is Type II restriction enzyme AvaI.